The primary structure comprises 101 residues: MLKKNGFIVWPVYFDSTKPRKWRRVPRKLAVEKPTLSEIVEAVKREGFSFTVEENAKHPAYWYEVQGRVIVQANVKKSVLLKKIAENLQKIRAEQSSKRRR.

The protein belongs to the SRP19 family. As to quaternary structure, part of the signal recognition particle protein translocation system, which is composed of SRP and FtsY. Archaeal SRP consists of a 7S RNA molecule of 300 nucleotides and two protein subunits: SRP54 and SRP19.

The protein localises to the cytoplasm. Involved in targeting and insertion of nascent membrane proteins into the cytoplasmic membrane. Binds directly to 7S RNA and mediates binding of the 54 kDa subunit of the SRP. The protein is Signal recognition particle 19 kDa protein of Thermofilum pendens (strain DSM 2475 / Hrk 5).